The following is a 249-amino-acid chain: 1-(5-phosphoribosyl)-5-[(5-phosphoribosylamino)methylideneamino] imidazole-4-carboxamide isomerase (249 aa).

D8 acts as the Proton acceptor in catalysis. D130 acts as the Proton donor in catalysis.

Belongs to the HisA/HisF family.

The protein localises to the cytoplasm. The catalysed reaction is 1-(5-phospho-beta-D-ribosyl)-5-[(5-phospho-beta-D-ribosylamino)methylideneamino]imidazole-4-carboxamide = 5-[(5-phospho-1-deoxy-D-ribulos-1-ylimino)methylamino]-1-(5-phospho-beta-D-ribosyl)imidazole-4-carboxamide. Its pathway is amino-acid biosynthesis; L-histidine biosynthesis; L-histidine from 5-phospho-alpha-D-ribose 1-diphosphate: step 4/9. This Nitrosococcus oceani (strain ATCC 19707 / BCRC 17464 / JCM 30415 / NCIMB 11848 / C-107) protein is 1-(5-phosphoribosyl)-5-[(5-phosphoribosylamino)methylideneamino] imidazole-4-carboxamide isomerase.